An 80-amino-acid polypeptide reads, in one-letter code: Inner kinetochore subunit MHF2 (80 aa).

The protein belongs to the CENP-X/MHF2 family. The MHF histone-fold complex is a heterotetramer of 2 MHF1-MHF2 heterodimers. Together with MPH1/FANCM, forms the FANCM-MHF complex. Component of the inner kinetochore constitutive centromere-associated network (CCAN) (also known as central kinetochore CTF19 complex in yeast), which is composed of at least AME1, CHL4, CNN1, CTF3, CTF19, IML3, MCM16, MCM21, MCM22, MHF1, MHF2, MIF2, NKP1, NKP2, OKP1 and WIP1.

Functionally, DNA-binding component of a FANCM-MHF complex involved in DNA damage repair and genome maintenance. FANCM-MHF promotes gene conversion at blocked replication forks, probably by reversal of the stalled fork. Component of the kinetochore, a multiprotein complex that assembles on centromeric DNA and attaches chromosomes to spindle microtubules, mediating chromosome segregation and sister chromatid segregation during meiosis and mitosis. Component of the inner kinetochore constitutive centromere-associated network (CCAN), which serves as a structural platform for outer kinetochore assembly. The sequence is that of Inner kinetochore subunit MHF2 from Saccharomyces cerevisiae (strain ATCC 204508 / S288c) (Baker's yeast).